The chain runs to 173 residues: uncharacterized protein (173 aa).

Residues 2 to 171 (VTVREAKLED…PDLSALKTLL (170 aa)) form the N-acetyltransferase domain.

The protein belongs to the acetyltransferase family.

This is an uncharacterized protein from Bacillus subtilis (strain 168).